We begin with the raw amino-acid sequence, 192 residues long: MAHGPRYKLAFRRRREGKTDYRARYKMVETGKSRLVVRITTYHVIAQIINVGMNGDETLVSAHSKQLQKMGWLGGTSNTAAAYLTGYLCGKRALKEGIEEAVLDIGLRPAIRGSKVFAALKGAVDAGLNVPHGESVLPDESRIRGEHIMEYAESLDEEELRKRFSKYLERGLSPVDLPEHFDEIKKRIDEEV.

This sequence belongs to the universal ribosomal protein uL18 family. As to quaternary structure, part of the 50S ribosomal subunit. Contacts the 5S and 23S rRNAs.

Its function is as follows. This is one of the proteins that bind and probably mediate the attachment of the 5S RNA into the large ribosomal subunit, where it forms part of the central protuberance. In Methanothermobacter thermautotrophicus (strain ATCC 29096 / DSM 1053 / JCM 10044 / NBRC 100330 / Delta H) (Methanobacterium thermoautotrophicum), this protein is Large ribosomal subunit protein uL18.